The primary structure comprises 220 residues: Ribonuclease HII (220 aa).

The region spanning Met1–Lys219 is the RNase H type-2 domain. The a divalent metal cation site is built by Asp7, Glu8, and Asp105.

Belongs to the RNase HII family. Mn(2+) is required as a cofactor. It depends on Mg(2+) as a cofactor.

It localises to the cytoplasm. It carries out the reaction Endonucleolytic cleavage to 5'-phosphomonoester.. Endonuclease that specifically degrades the RNA of RNA-DNA hybrids. The chain is Ribonuclease HII from Methanosarcina mazei (strain ATCC BAA-159 / DSM 3647 / Goe1 / Go1 / JCM 11833 / OCM 88) (Methanosarcina frisia).